Here is a 507-residue protein sequence, read N- to C-terminus: Fluoroacetaldehyde dehydrogenase (507 aa).

Residue G219–G225 coordinates NAD(+). Residues E263 and C302 contribute to the active site.

Belongs to the aldehyde dehydrogenase family. As to quaternary structure, homotetramer.

The catalysed reaction is fluoroacetaldehyde + NAD(+) + H2O = fluoroacetate + NADH + 2 H(+). In terms of biological role, catalyzes the oxidation of fluoroacetaldehyde to fluoroacetate. Has high affinity for fluoroacetate and glycolaldehyde but not for acetaldehyde. The polypeptide is Fluoroacetaldehyde dehydrogenase (Streptantibioticus cattleyicolor (strain ATCC 35852 / DSM 46488 / JCM 4925 / NBRC 14057 / NRRL 8057) (Streptomyces cattleya)).